The primary structure comprises 311 residues: Protoheme IX farnesyltransferase (311 aa).

A run of 8 helical transmembrane segments spans residues 19–39, 55–75, 101–121, 123–143, 169–189, 221–241, 242–262, and 290–310; these read VLAY…VATI, ILAT…LNCV, NAFV…WWQA, LLSG…YTLG, AVTG…FFWT, VTKQ…ALVP, ATGV…LLMA, and VVFC…GSFF.

Belongs to the UbiA prenyltransferase family. Protoheme IX farnesyltransferase subfamily.

Its subcellular location is the cell membrane. The enzyme catalyses heme b + (2E,6E)-farnesyl diphosphate + H2O = Fe(II)-heme o + diphosphate. It functions in the pathway porphyrin-containing compound metabolism; heme O biosynthesis; heme O from protoheme: step 1/1. Its function is as follows. Converts heme B (protoheme IX) to heme O by substitution of the vinyl group on carbon 2 of heme B porphyrin ring with a hydroxyethyl farnesyl side group. This Nocardia farcinica (strain IFM 10152) protein is Protoheme IX farnesyltransferase.